Consider the following 496-residue polypeptide: Ankyrin repeat domain-containing protein 53 (496 aa).

The segment covering 1–15 has biased composition (low complexity); sequence MASAGSTARRAGSGS. Residues 1–66 are disordered; it reads MASAGSTARR…RPSEESDQTT (66 aa). The segment covering 51–60 has biased composition (basic and acidic residues); it reads AESKQPRPSE. ANK repeat units lie at residues 105–135, 139–172, and 176–205; these read KGFTAIHFAAQRGKLACLQVLVEEYKFPVNL, NSQTPLHLVIHKDNTTVALPCIYYLLEKGAALNA, and NGCTPLHLAVREGLLDCVKVLVQSGANVHA. Positions 292 to 320 are disordered; it reads LVSNTKQARATALSKTPEQRGSQCSSSFH.

As to quaternary structure, interacts with PSRC1; recruited by PSRC1 to the spindle during mitosis. In terms of processing, phosphorylated during mitosis.

It is found in the cytoplasm. It localises to the cytoskeleton. The protein localises to the spindle. The protein resides in the spindle pole. Its function is as follows. Required for normal progression through mitosis. Involved in chromosome alignment and cytokinesis via regulation of microtubules polymerization. The protein is Ankyrin repeat domain-containing protein 53 (ANKRD53) of Macaca fascicularis (Crab-eating macaque).